Reading from the N-terminus, the 228-residue chain is LHFPL tetraspan subfamily member 2 protein (228 aa).

The next 4 helical transmembrane spans lie at Met-11 to Ala-31, Ile-102 to Met-122, Ile-132 to Ile-152, and Leu-181 to Phe-201.

It belongs to the LHFP family. Expressed in all tissues and cell lines examined except brain and peripheral blood leukocytes.

The protein localises to the membrane. In terms of biological role, plays a role in female and male fertility. Involved in distal reproductive tract development. The sequence is that of LHFPL tetraspan subfamily member 2 protein from Homo sapiens (Human).